We begin with the raw amino-acid sequence, 599 residues long: Elongation factor 4 (599 aa).

Positions 2–184 (KNIRNFSIIA…RLVRDIPPPQ (183 aa)) constitute a tr-type G domain. Residues 14 to 19 (DHGKST) and 131 to 134 (NKID) each bind GTP.

The protein belongs to the TRAFAC class translation factor GTPase superfamily. Classic translation factor GTPase family. LepA subfamily.

It localises to the cell inner membrane. The catalysed reaction is GTP + H2O = GDP + phosphate + H(+). Required for accurate and efficient protein synthesis under certain stress conditions. May act as a fidelity factor of the translation reaction, by catalyzing a one-codon backward translocation of tRNAs on improperly translocated ribosomes. Back-translocation proceeds from a post-translocation (POST) complex to a pre-translocation (PRE) complex, thus giving elongation factor G a second chance to translocate the tRNAs correctly. Binds to ribosomes in a GTP-dependent manner. This is Elongation factor 4 from Salmonella paratyphi C (strain RKS4594).